Here is a 301-residue protein sequence, read N- to C-terminus: MNWITNYVRPKINSMLGRREMPENLWIKDPSTGEMVFHKDLESNQFVIPSSGHHMRIKAKDRLRFFFDNGEYTTLEAPKVPLDPLKFRDEKKYIDRLKDYRSRTGMDDAIVNGLGTIEGLPIVATVQDFSFMGGSLGMGAGEAIIQGFEKAIELKRPLVLFASSGGARMQEGILSLMQLPRTTVAVEMLKEAGLPYIVVLTNPTTGGVTASYAMLGDIHIAEPGALIGFAGPRVIEQTIREKLPEGFQSSEYLMEHGMVDMVVSRLELKATIARLLKIMTKQPANSDAPAPQKPDADSKAA.

The region spanning 25-294 (LWIKDPSTGE…NSDAPAPQKP (270 aa)) is the CoA carboxyltransferase N-terminal domain.

Belongs to the AccD/PCCB family. In terms of assembly, acetyl-CoA carboxylase is a heterohexamer composed of biotin carboxyl carrier protein (AccB), biotin carboxylase (AccC) and two subunits each of ACCase subunit alpha (AccA) and ACCase subunit beta (AccD).

The protein localises to the cytoplasm. It carries out the reaction N(6)-carboxybiotinyl-L-lysyl-[protein] + acetyl-CoA = N(6)-biotinyl-L-lysyl-[protein] + malonyl-CoA. It functions in the pathway lipid metabolism; malonyl-CoA biosynthesis; malonyl-CoA from acetyl-CoA: step 1/1. Component of the acetyl coenzyme A carboxylase (ACC) complex. Biotin carboxylase (BC) catalyzes the carboxylation of biotin on its carrier protein (BCCP) and then the CO(2) group is transferred by the transcarboxylase to acetyl-CoA to form malonyl-CoA. This is Acetyl-coenzyme A carboxylase carboxyl transferase subunit beta from Brucella canis (strain ATCC 23365 / NCTC 10854 / RM-666).